Reading from the N-terminus, the 261-residue chain is Ribonuclease HII (261 aa).

The RNase H type-2 domain maps to 71-259 (QYIAGVDEVG…VKEAKLHFES (189 aa)). 3 residues coordinate a divalent metal cation: aspartate 77, glutamate 78, and aspartate 169.

Belongs to the RNase HII family. It depends on Mn(2+) as a cofactor. Requires Mg(2+) as cofactor.

It is found in the cytoplasm. The catalysed reaction is Endonucleolytic cleavage to 5'-phosphomonoester.. Functionally, endonuclease that specifically degrades the RNA of RNA-DNA hybrids. In Listeria innocua serovar 6a (strain ATCC BAA-680 / CLIP 11262), this protein is Ribonuclease HII.